Consider the following 301-residue polypeptide: Protoheme IX farnesyltransferase (301 aa).

A run of 9 helical transmembrane segments spans residues Phe20 to Leu42, Val55 to Phe75, Ala105 to Trp125, Gln126 to Ala146, Leu150 to Val172, Phe176 to Ile198, Met227 to Val247, Val249 to Met269, and Phe280 to Phe300.

The protein belongs to the UbiA prenyltransferase family. Protoheme IX farnesyltransferase subfamily. As to quaternary structure, interacts with CtaA.

The protein localises to the cell membrane. It catalyses the reaction heme b + (2E,6E)-farnesyl diphosphate + H2O = Fe(II)-heme o + diphosphate. The protein operates within porphyrin-containing compound metabolism; heme O biosynthesis; heme O from protoheme: step 1/1. In terms of biological role, converts heme B (protoheme IX) to heme O by substitution of the vinyl group on carbon 2 of heme B porphyrin ring with a hydroxyethyl farnesyl side group. The chain is Protoheme IX farnesyltransferase from Listeria innocua serovar 6a (strain ATCC BAA-680 / CLIP 11262).